We begin with the raw amino-acid sequence, 29 residues long: Trypsin inhibitor 4 (29 aa).

Intrachain disulfides connect Cys-3-Cys-20, Cys-10-Cys-22, and Cys-16-Cys-28.

This sequence belongs to the protease inhibitor I7 (squash-type serine protease inhibitor) family.

The protein resides in the secreted. Functionally, strongly inhibits trypsin, weakly inhibits chymotrypsin. This chain is Trypsin inhibitor 4, found in Cyclanthera pedata (Achocha).